Reading from the N-terminus, the 204-residue chain is Dephospho-CoA kinase (204 aa).

The 198-residue stretch at 4-201 (VIGLTGGIAS…EKYLAMCKKN (198 aa)) folds into the DPCK domain. Position 12–17 (12–17 (ASGKTT)) interacts with ATP.

This sequence belongs to the CoaE family.

It localises to the cytoplasm. The enzyme catalyses 3'-dephospho-CoA + ATP = ADP + CoA + H(+). Its pathway is cofactor biosynthesis; coenzyme A biosynthesis; CoA from (R)-pantothenate: step 5/5. Catalyzes the phosphorylation of the 3'-hydroxyl group of dephosphocoenzyme A to form coenzyme A. The sequence is that of Dephospho-CoA kinase from Vibrio parahaemolyticus serotype O3:K6 (strain RIMD 2210633).